The following is a 296-amino-acid chain: NADH-cytochrome b5 reductase 2 (296 aa).

A helical membrane pass occupies residues 2-24 (LVALAAIGVTVLLFLIKALGSGA). Residues 35–147 (NAKYPLPLIE…RGPNGLLVYK (113 aa)) enclose the FAD-binding FR-type domain. FAD contacts are provided by residues 127 to 142 (DSLKIGETIDFRGPNG) and 166 to 201 (VAKHVGMLAGGTGITPMLQLIRQITQDPNDNTKCYL).

This sequence belongs to the flavoprotein pyridine nucleotide cytochrome reductase family. It depends on FAD as a cofactor.

Its subcellular location is the membrane. The enzyme catalyses 2 Fe(III)-[cytochrome b5] + NADH = 2 Fe(II)-[cytochrome b5] + NAD(+) + H(+). In terms of biological role, NADH-cytochrome b5 reductases are involved in desaturation and elongation of fatty acids, cholesterol biosynthesis and drug metabolism. This Xenopus laevis (African clawed frog) protein is NADH-cytochrome b5 reductase 2 (cyb5r2).